Consider the following 85-residue polypeptide: U4-theraphotoxin-Hhn1e (85 aa).

The signal sequence occupies residues 1–22; it reads MKVTLIAILTCAAVLVLHTTAA. Positions 23–48 are excised as a propeptide; sequence EELEAESQLMEVGMPDTELAAVDEER. 3 disulfides stabilise this stretch: cysteine 52-cysteine 66, cysteine 56-cysteine 77, and cysteine 71-cysteine 82.

It belongs to the neurotoxin 12 (Hwtx-2) family. 02 (Hwtx-2) subfamily. Expressed by the venom gland.

Its subcellular location is the secreted. Its function is as follows. Postsynaptic neurotoxin. This chain is U4-theraphotoxin-Hhn1e, found in Cyriopagopus hainanus (Chinese bird spider).